The following is a 32-amino-acid chain: Zinc metalloproteinase/disintegrin-like CdtV1 (32 aa).

2 disulfides stabilise this stretch: Cys-5-Cys-14 and Cys-7-Cys-15.

Belongs to the venom metalloproteinase (M12B) family. P-II subfamily. P-IIa sub-subfamily. In terms of assembly, monomer. As to expression, expressed by the venom gland.

The protein localises to the secreted. Snake venom metalloproteinase that impairs hemostasis in the envenomed animal. The polypeptide is Zinc metalloproteinase/disintegrin-like CdtV1 (Crotalus durissus terrificus (South American rattlesnake)).